A 94-amino-acid chain; its full sequence is Protein S100-A1 (94 aa).

2 consecutive EF-hand domains span residues 13–48 (INVF…FLDA) and 50–85 (KDVD…LTVA). The Ca(2+) site is built by K28, E33, D63, N65, D67, E69, and E74. Residue C86 is modified to S-nitrosocysteine.

It belongs to the S-100 family. In terms of assembly, dimer of either two alpha chains, or two beta chains, or one alpha and one beta chain. Also forms heterodimers with S100P. Interacts with AGER. Interacts with CAPZA1. Interacts with FKBP4. Interacts with RYR1 and RYR2. Interacts with CACYBP in a calcium-dependent manner. Interacts with PPP5C (via TPR repeats); the interaction is calcium-dependent and modulates PPP5C activity. Interacts with ATP2A2 and PLN in a Ca(2+)-dependent manner. Interacts with mitochondrial F1-ATPase subunits ATP5F1A and ATP5F1B; these interactions increase F1-ATPase activity. In terms of processing, glutathionylated; glutathionylation increases affinity to calcium about 10-fold. As to expression, highly prevalent in heart. Also found in lesser quantities in skeletal muscle and brain.

The protein resides in the cytoplasm. The protein localises to the sarcoplasmic reticulum. It localises to the mitochondrion. Functionally, small calcium binding protein that plays important roles in several biological processes such as Ca(2+) homeostasis, chondrocyte biology and cardiomyocyte regulation. In response to an increase in intracellular Ca(2+) levels, binds calcium which triggers conformational changes. These changes allow interactions with specific target proteins and modulate their activity. Regulates a network in cardiomyocytes controlling sarcoplasmic reticulum Ca(2+) cycling and mitochondrial function through interaction with the ryanodine receptors RYR1 and RYR2, sarcoplasmic reticulum Ca(2+)-ATPase/ATP2A2 and mitochondrial F1-ATPase. Facilitates diastolic Ca(2+) dissociation and myofilament mechanics in order to improve relaxation during diastole. This is Protein S100-A1 (S100A1) from Homo sapiens (Human).